We begin with the raw amino-acid sequence, 126 residues long: Alpha-lactalbumin (126 aa).

A C-type lysozyme domain is found at 1 to 126 (KVFEKCELSQ…CIADLDQWKC (126 aa)). Cystine bridges form between cysteine 6-cysteine 126, cysteine 30-cysteine 117, cysteine 63-cysteine 82, and cysteine 78-cysteine 96. An N-linked (GlcNAc...) asparagine glycan is attached at asparagine 47. Residues lysine 84, aspartate 87, aspartate 89, aspartate 92, and aspartate 93 each coordinate Ca(2+).

This sequence belongs to the glycosyl hydrolase 22 family. As to quaternary structure, lactose synthase (LS) is a heterodimer of a catalytic component, beta1,4-galactosyltransferase (beta4Gal-T1) and a regulatory component, alpha-lactalbumin (LA). As to expression, mammary gland specific. Secreted in milk.

It is found in the secreted. In terms of biological role, regulatory subunit of lactose synthase, changes the substrate specificity of galactosyltransferase in the mammary gland making glucose a good acceptor substrate for this enzyme. This enables LS to synthesize lactose, the major carbohydrate component of milk. In other tissues, galactosyltransferase transfers galactose onto the N-acetylglucosamine of the oligosaccharide chains in glycoproteins. The polypeptide is Alpha-lactalbumin (LALBA) (Tachyglossus aculeatus aculeatus (Southeast Australian short-beaked echidna)).